The following is a 390-amino-acid chain: Probable tRNA pseudouridine synthase D 2 (390 aa).

Asp-93 functions as the Nucleophile in the catalytic mechanism. One can recognise a TRUD domain in the interval 166-353; that stretch reads YVLNYYGIQR…YGTRRKMVTP (188 aa).

It belongs to the pseudouridine synthase TruD family.

It catalyses the reaction uridine(13) in tRNA = pseudouridine(13) in tRNA. In terms of biological role, could be responsible for synthesis of pseudouridine from uracil-13 in transfer RNAs. The sequence is that of Probable tRNA pseudouridine synthase D 2 from Methanococcus maripaludis (strain DSM 14266 / JCM 13030 / NBRC 101832 / S2 / LL).